Consider the following 100-residue polypeptide: HssA/B-like protein 37 (100 aa).

Disordered regions lie at residues 1-29 (MTLF…SGTS) and 67-100 (RSRG…CCGI). Gly residues predominate over residues 71 to 93 (SCGGNRGNGNGNGGMGGGNGSCC).

This sequence belongs to the hssA/B family.

This is HssA/B-like protein 37 (hssl37) from Dictyostelium discoideum (Social amoeba).